Consider the following 503-residue polypeptide: Maturase K (503 aa).

This sequence belongs to the intron maturase 2 family. MatK subfamily.

The protein resides in the plastid. Its subcellular location is the chloroplast. Usually encoded in the trnK tRNA gene intron. Probably assists in splicing its own and other chloroplast group II introns. The chain is Maturase K from Rosa acicularis (Prickly rose).